An 821-amino-acid chain; its full sequence is MRGVFIVIVTCLVFLPDPLRAGVASIGSITPGFGGSQMNYINNDGIFLESNNSAFGFGFVTTQDSVTLFTLSIIHKSSTKLIWSANRASPVSNSDKFVFDDNGNVVMEGTEVWRLDNSGKNASRIELRDSGNLVVVSVDGTSIWESFDHPTDTLITNQAFKEGMKLTSSPSSSNMTYALEIKSGDMVLSVNSLTPQVYWSMANARERIINKDGGVVTSSSLLGNSWRFFDQKQVLLWQFVFSDNKDDNTTWIAVLGNNGVISFSNLGSGASAADSSTKIPSDLCGTPEPCGPYYVCSGSKVCGCVSGLSRARSDCKTGITSPCKKTKDNATLPLQLVSAGDGVDYFALGYAPPFSKKTDLDSCKEFCHNNCSCLGLFFQNSSGNCFLFDYIGSFKTSGNGGSGFVSYIKIASTGSGGGDNGEDDGKHFPYVVIIVVVTVFIIAVLIFVAFRIHKRKKMILEAPQESSEEDNFLENLSGMPIRFAYKDLQSATNNFSVKLGQGGFGSVYEGTLPDGSRLAVKKLEGIGQGKKEFRAEVSIIGSIHHLHLVRLRGFCAEGAHRLLAYEFLSKGSLERWIFRKKDGDVLLDWDTRFNIALGTAKGLAYLHEDCDARIVHCDIKPENILLDDNFNAKVSDFGLAKLMTREQSHVFTTMRGTRGYLAPEWITNYAISEKSDVYSYGMVLLELIGGRKNYDPSETSEKCHFPSFAFKKMEEGKLMDIVDGKMKNVDVTDERVQRAMKTALWCIQEDMQTRPSMSKVVQMLEGVFPVVQPPSSSTMGSRLYSSFFKSISEDGGATTSSGPSDCNSENYLSAVRLSGPR.

An N-terminal signal peptide occupies residues 1 to 21 (MRGVFIVIVTCLVFLPDPLRA). Topologically, residues 22–429 (GVASIGSITP…NGEDDGKHFP (408 aa)) are extracellular. The Bulb-type lectin domain occupies 33-148 (FGGSQMNYIN…DGTSIWESFD (116 aa)). Residues asparagine 51, asparagine 121, asparagine 174, and asparagine 248 are each glycosylated (N-linked (GlcNAc...) asparagine). Positions 280–314 (PSDLCGTPEPCGPYYVCSGSKVCGCVSGLSRARSD) constitute an EGF-like; atypical domain. Cystine bridges form between cysteine 284–cysteine 296 and cysteine 290–cysteine 302. One can recognise a PAN domain in the interval 323–411 (CKKTKDNATL…SGFVSYIKIA (89 aa)). 3 N-linked (GlcNAc...) asparagine glycosylation sites follow: asparagine 329, asparagine 370, and asparagine 380. Intrachain disulfides connect cysteine 363–cysteine 385 and cysteine 367–cysteine 373. The chain crosses the membrane as a helical span at residues 430-450 (YVVIIVVVTVFIIAVLIFVAF). Over 451-821 (RIHKRKKMIL…LSAVRLSGPR (371 aa)) the chain is Cytoplasmic. One can recognise a Protein kinase domain in the interval 493 to 768 (NNFSVKLGQG…KVVQMLEGVF (276 aa)). Residues 499–507 (LGQGGFGSV) and lysine 521 each bind ATP. Residues 581 to 599 (KDGDVLLDWDTRFNIALGT) form a caM-binding region. Aspartate 618 functions as the Proton acceptor in the catalytic mechanism. Serine 635 is modified (phosphoserine). The residue at position 652 (threonine 652) is a Phosphothreonine.

This sequence belongs to the protein kinase superfamily. Ser/Thr protein kinase family. Interacts with PUB9, PUB13, PUB14 and PUB29.

It is found in the membrane. The enzyme catalyses L-seryl-[protein] + ATP = O-phospho-L-seryl-[protein] + ADP + H(+). It carries out the reaction L-threonyl-[protein] + ATP = O-phospho-L-threonyl-[protein] + ADP + H(+). The sequence is that of G-type lectin S-receptor-like serine/threonine-protein kinase SD2-5 (SD25) from Arabidopsis thaliana (Mouse-ear cress).